A 185-amino-acid polypeptide reads, in one-letter code: Ribosome-recycling factor (185 aa).

Residues 137 to 158 are disordered; that stretch reads DELKKLEKDHTASEDEVKRAQD.

It belongs to the RRF family.

Its subcellular location is the cytoplasm. In terms of biological role, responsible for the release of ribosomes from messenger RNA at the termination of protein biosynthesis. May increase the efficiency of translation by recycling ribosomes from one round of translation to another. This is Ribosome-recycling factor from Desulfitobacterium hafniense (strain Y51).